Reading from the N-terminus, the 207-residue chain is SPRY domain-containing protein 4 (207 aa).

The region spanning 12–207 (YRWGTKRWGV…HSGLEVPKGL (196 aa)) is the B30.2/SPRY domain. Lysine 53 and lysine 130 each carry N6-acetyllysine. Lysine 139 is modified (N6-succinyllysine).

This Mus musculus (Mouse) protein is SPRY domain-containing protein 4 (Spryd4).